A 390-amino-acid polypeptide reads, in one-letter code: MAAPNLITPLRDICVKVVAANFEGCPTFGPLPDKYVKRIIDILPLDLPLELVGSLIADEDYWRRRSQARWKNCEVAAHGYSWKQLFFERNLMEFLEQYDPAVTDLSSLKRLLTYSRRFVQTVHIRQLPSHLDLQILFECMVNTPSSLALSYNLKEVGMDYDRSLFGMKLSDCRALAKALEHTETLTHLDLSNNSLDDDKVRMLASGLVENLSITHLNLSHNKIADRGVRALAKLLDGHSVISLLELHDNQIHTEGAESLARAFKSNQCLLSVNLRLNRMGDEGCKAVVESVRGSPTLQRLNISANAAGPGTAAAVVALLRLNNTLTELDVSCNQFGEDACGNVRRALEQNGSVRLMDVRMTGINPDDEMAIAENLRARQERVDKARVLGK.

LRR repeat units lie at residues 182 to 205 (TETL…MLAS), 210 to 233 (NLSI…ALAK), and 238 to 261 (HSVI…SLAR).

This sequence belongs to the DRC5 family. Component of the nexin-dynein regulatory complex (N-DRC). Interacts with DRC1, DRC2, DRC3, DRC4, DRC7 and DRC11.

The protein resides in the cell projection. It is found in the cilium. The protein localises to the flagellum. Its subcellular location is the cytoplasm. It localises to the cytoskeleton. The protein resides in the flagellum axoneme. In terms of biological role, component of the nexin-dynein regulatory complex (N-DRC) a key regulator of ciliary/flagellar motility which maintains the alignment and integrity of the distal axoneme and regulates microtubule sliding in motile axonemes. May play a role in the assembly of N-DRC. This chain is Dynein regulatory complex subunit 5, found in Chlamydomonas reinhardtii (Chlamydomonas smithii).